The primary structure comprises 2178 residues: MFFKRQKGQYHEVERVTRFKLIKSGKHWLRAATSQFGLLRLMKGADISSVEVKVAEEQSVEKGGLNYLKGIIATGAVLGGAVVTSSSVYAEEEQALEKVIDTRDVLATRGEAVLSEEAATTLSSEGANPVESLSDTLSASESASANSVSTSISISESFSVSASASLSSSSSLSQSSSESASASESLSVSASTSQSFSSTTSSTQSSNNESLISSDSSNSLNTNQSVSARNQNARVRTRRAVAANDTEAPQVKSGDYVVYRGESFEYYAEITDNSGQVNRVVIRNVEGGANSTYLSPNWVKYSTENLGRPGNATVQNPLRTRIFGEVPLNEIVNEKSYYTRYIVAWDPSGNATQMVDNANRNGLERFVLTVKSQNEKYDPADPSVTYVNNLSNLSTSEREAVAAAVRAANPNIPPTAKITVSQNGTVTITYPDKSTDTIPANRVVKDLQISKSNSASQSSSVSASQSASTSVSASISASMSASVSVSTSASTSASVSASESASTSASVSASESASTSASVSASKSSSTSASVSASESASTSASVSASESASTSASVSASESASTSASVSASTSASTSASVSASESASTSASVSASESASTSASVSASESASTSASVSASESASTSASVSASESSSTSASVSASESASTSASVSASESASTSASVSASTSASTSASVSASTSASTSASVSASTSASTSASVSASESASTSASVSASESASTSASVSASTSASTSASVSASTSASTSASVSASESASTSASVSASTSASTSASVSASESASTSASVSASTSASTSASVSASESASTSASVSASESASTSASVSASTSASTSASVSASESASTSASVSASESASTSASVSASESASTSASVSASTSASTSASVSASESASTSASVSASESASTSASVSASESASTSASVSASESASTSASVSASTSASTSASVSASESASTSASVSASESASTSASVSASESASTSASVSASESASTSASISASESASTSASVSASESASTSASVSASTSASTSASVSASESASTSASVSASESASTSASVSASESASTSASVSASESASTSASVSASESASTSASVSASTSASTSASVSASESSSTSASVSASESASTSSSVSASESASTSASVSASESASTSASVSASESASTSASVSASESASTSASVSASESASTSASVSASESASTSASVSASESASTSASVSASTSASTSASVSASESASTSASVSASESASTSASVSASTSASTSASVSASESASTSASVSASESASTSASVSASESASTSASVSASTSASTSASVSASESASTSASVSASESASMSASVSASESASTSASVSASESASTSASVSASESASTSASVSASESASTSASVSASESASTSASVSASESASTSASVSASESAYTSASASASESASTSASISASESASTSASVSASESAYTSASVSASESGSTSASVSASESASTSASVSASESASTSASVSASTSASTSASVSASESSSTSASVSASESASTSASVSASESASTSASVSASTSASTSASVSASESASTSASVSASESASTSASVSASESASTSASVSTSESASTSASVSASESASTSASVSASESASTSASVSASESSSTSASVSASESASTSASVSASESASTSASVSASESASTSASVSASESASTSVSVSASESASTSASVSASESASSSASVSASKSASMSASVLASESASTSASVSASESASTSASVSASESASTSASVSASESASTSASVSASESASTSASVSASESASTSASVSASESASTSASVSASTSASTSASVSASESASTSASVSASESASTSASVSASESASTSASVSASESVSANESASTSASVSASTSASTSASVSSSESASTSASVSASESASTSASVSASESASTSASVSASESASISASISASESSSTSASVSASESASTSASVSASTSTSTSASVSASESASTSASVFASESASTSASVSASESASTSASVSASTSASTSASVSASESASTSASISASESASTSASISASESSSTSASVSASTSASTSASVSASESTSTSVSISASESVSISTSVSQSMSVSESLSLSVSTSTLHSQLNGIYESELNSLSLSESLSMSQSLSQSLSDSQSTSATQSMHDRISKGQLPRTGESESKASILALGIGALGLAFKKRKKNESED.

The signal sequence occupies residues 1–90 (MFFKRQKGQY…AVVTSSSVYA (90 aa)). The segment at 91-137 (EEEQALEKVIDTRDVLATRGEAVLSEEAATTLSSEGANPVESLSDTL) is non-repeat region 1 (NR1). Positions 138–219 (SASESASANS…SLISSDSSNS (82 aa)) are ser-rich region 1 (SR1). Low complexity predominate over residues 192-244 (TSQSFSSTTSSTQSSNNESLISSDSSNSLNTNQSVSARNQNARVRTRRAVAAN). 11 disordered regions span residues 192–246 (TSQS…ANDT), 495–557 (VSAS…SVSA), 584–653 (SAST…SVSA), 836–857 (SASTSASVSASESASTSASVSA), 884–917 (SASTSASVSASESASTSASVSASESASTSASVSA), 944–993 (SAST…SESA), 1020–1289 (SASV…SVSA), 1341–1390 (ASTS…ESAS), 1488–1685 (SASV…SVSA), 1725–1901 (ASTS…SAST), and 2119–2151 (LSQSLSDSQSTSATQSMHDRISKGQLPRTGESE). The tract at residues 220–449 (LNTNQSVSAR…ANRVVKDLQI (230 aa)) is non-repeat region 2 (NR2). Residues 450–2143 (SKSNSASQSS…SMHDRISKGQ (1694 aa)) form a ser-rich region 2 (SR2) region. Residues 2119–2130 (LSQSLSDSQSTS) show a composition bias toward low complexity. The LPXTG sorting signal motif lies at 2144-2148 (LPRTG). Thr2147 carries the post-translational modification Pentaglycyl murein peptidoglycan amidated threonine. Residues 2148-2178 (GESESKASILALGIGALGLAFKKRKKNESED) constitute a propeptide, removed by sortase.

This sequence belongs to the serine-rich repeat protein (SRRP) family. Post-translationally, the protein is glycosylated in vivo; constructs without SR1 and SR2 are not glycosylated.

Its subcellular location is the secreted. It is found in the cell wall. A cell wall protein involved with PadA in host cell interactions required for colonization and pathogensis. Mediates hemagglutination and adherence to ghst glycoproteins. Recognizes fetuin-A (AHSG), a highly glycosylated human plasma protein, also involved in recognition of human platelets, probably via platelet glycoprotein Ib alpha (GP1BA). Acts in concert with PadA to promote binding to glycosylated human fibronectin (FN1) and vitronectin (VTN), and biofilm formation. Plays a major role in fibronectin and vitronectin binding; binding is mediated by glycosylated regions. Probably mediates interaction of PadA with resting platelets. The polypeptide is Streptococcal hemagglutinin (Streptococcus gordonii (strain Challis / ATCC 35105 / BCRC 15272 / CH1 / DL1 / V288)).